Consider the following 616-residue polypeptide: Dihydroxy-acid dehydratase (616 aa).

Residue Asp-81 participates in Mg(2+) binding. Position 122 (Cys-122) interacts with [2Fe-2S] cluster. Residues Asp-123 and Lys-124 each contribute to the Mg(2+) site. Position 124 is an N6-carboxylysine (Lys-124). Cys-195 serves as a coordination point for [2Fe-2S] cluster. Glu-491 serves as a coordination point for Mg(2+). Ser-517 (proton acceptor) is an active-site residue.

It belongs to the IlvD/Edd family. In terms of assembly, homodimer. Requires [2Fe-2S] cluster as cofactor. Mg(2+) serves as cofactor.

The enzyme catalyses (2R)-2,3-dihydroxy-3-methylbutanoate = 3-methyl-2-oxobutanoate + H2O. The catalysed reaction is (2R,3R)-2,3-dihydroxy-3-methylpentanoate = (S)-3-methyl-2-oxopentanoate + H2O. The protein operates within amino-acid biosynthesis; L-isoleucine biosynthesis; L-isoleucine from 2-oxobutanoate: step 3/4. Its pathway is amino-acid biosynthesis; L-valine biosynthesis; L-valine from pyruvate: step 3/4. Its function is as follows. Functions in the biosynthesis of branched-chain amino acids. Catalyzes the dehydration of (2R,3R)-2,3-dihydroxy-3-methylpentanoate (2,3-dihydroxy-3-methylvalerate) into 2-oxo-3-methylpentanoate (2-oxo-3-methylvalerate) and of (2R)-2,3-dihydroxy-3-methylbutanoate (2,3-dihydroxyisovalerate) into 2-oxo-3-methylbutanoate (2-oxoisovalerate), the penultimate precursor to L-isoleucine and L-valine, respectively. The sequence is that of Dihydroxy-acid dehydratase from Escherichia coli O1:K1 / APEC.